The chain runs to 407 residues: uncharacterized protein (407 aa).

2 coiled-coil regions span residues 96-130 (TDSI…FKNE) and 287-345 (MKCY…AKTS). The segment covering 302–317 (EKRKDNLQKQNEEAAK) has biased composition (basic and acidic residues). A disordered region spans residues 302-394 (EKRKDNLQKQ…NMDPAINESD (93 aa)). Residues 318-331 (ITKRKNRQEKRREK) show a composition bias toward basic residues. Residues 344–370 (TSVSSIPDTSSTTTSTNSTPTNTKSNS) show a composition bias toward low complexity.

This is an uncharacterized protein from Acanthamoeba polyphaga (Amoeba).